The sequence spans 102 residues: NADH-quinone oxidoreductase subunit K 1 (102 aa).

3 helical membrane-spanning segments follow: residues Leu6–Val26, Leu31–Phe51, and Phe65–Leu85.

The protein belongs to the complex I subunit 4L family. In terms of assembly, NDH-1 is composed of 14 different subunits. Subunits NuoA, H, J, K, L, M, N constitute the membrane sector of the complex.

The protein localises to the cell membrane. The catalysed reaction is a quinone + NADH + 5 H(+)(in) = a quinol + NAD(+) + 4 H(+)(out). Functionally, NDH-1 shuttles electrons from NADH, via FMN and iron-sulfur (Fe-S) centers, to quinones in the respiratory chain. The immediate electron acceptor for the enzyme in this species is believed to be a menaquinone. Couples the redox reaction to proton translocation (for every two electrons transferred, four hydrogen ions are translocated across the cytoplasmic membrane), and thus conserves the redox energy in a proton gradient. The sequence is that of NADH-quinone oxidoreductase subunit K 1 from Symbiobacterium thermophilum (strain DSM 24528 / JCM 14929 / IAM 14863 / T).